Reading from the N-terminus, the 1437-residue chain is Envelopment polyprotein (1437 aa).

An N-terminal signal peptide occupies residues 1–21 (MAISTSLLIVALLIKLCLVNT). Residues 22–207 (APPISKCFQD…GYMASSICQN (186 aa)) lie on the Lumenal side of the membrane. 2 N-linked (GlcNAc...) asparagine; by host glycosylation sites follow: Asn-65 and Asn-88. The helical transmembrane segment at 208-228 (IELIIIIILTLAIFIFMCIIT) threads the bilayer. Topologically, residues 229–312 (RTYICYLMLP…RVARSLCKSK (84 aa)) are cytoplasmic. The helical transmembrane segment at 313-333 (GSSLVISILTAMLILSFITPL) threads the bilayer. Topologically, residues 334–373 (EAMTTNYPDDKKFTLKEVNDIVLGRDMEQELKSSILILMS) are lumenal. A helical transmembrane segment spans residues 374–394 (ICGIGIILIFFGLTVLLEIVL). Topologically, residues 395 to 460 (ELIAKRSTIF…TYYIKIRNLK (66 aa)) are cytoplasmic. The helical transmembrane segment at 461–481 (LIMLIFSIVILMQNATMLVVA) threads the bilayer. Topologically, residues 482–1391 (GENCWTNTEI…EPLNNFFGNY (910 aa)) are lumenal. Residues Asn-627 and Asn-1173 are each glycosylated (N-linked (GlcNAc...) asparagine; by host). The chain crosses the membrane as a helical span at residues 1392 to 1412 (LNMFLYILGGIILLFLALYIL). The Cytoplasmic segment spans residues 1413–1437 (MPMCARLRDELKRNERLHQMEMKKR).

It belongs to the orthobunyavirus envelope glycoprotein family. In terms of assembly, glycoprotein C and Glycoprotein N interact with each other. Post-translationally, specific enzymatic cleavages in vivo yield mature proteins including nonstructural protein NSm, Glycoprotein C, and Glycoprotein N.

It is found in the virion membrane. The protein localises to the host Golgi apparatus membrane. Its subcellular location is the host endoplasmic reticulum membrane. Functionally, glycoprotein C and Glycoprotein N interact with each other and are present at the surface of the virion. They are able to attach the virion to a cell receptor and to promote fusion of membranes after endocytosis of the virion. The chain is Envelopment polyprotein (GP) from Culex.